Here is a 289-residue protein sequence, read N- to C-terminus: S-methyl-5'-thioadenosine phosphorylase (289 aa).

Phosphate contacts are provided by residues S24, 66–67 (RH), and 99–100 (TA). Substrate is bound at residue M202. T203 is a binding site for phosphate. Position 226–228 (226–228 (DYD)) interacts with substrate.

Belongs to the PNP/MTAP phosphorylase family. MTAP subfamily. In terms of assembly, homotrimer.

It is found in the cytoplasm. The protein resides in the nucleus. It carries out the reaction S-methyl-5'-thioadenosine + phosphate = 5-(methylsulfanyl)-alpha-D-ribose 1-phosphate + adenine. It functions in the pathway amino-acid biosynthesis; L-methionine biosynthesis via salvage pathway; S-methyl-5-thio-alpha-D-ribose 1-phosphate from S-methyl-5'-thioadenosine (phosphorylase route): step 1/1. Catalyzes the reversible phosphorylation of S-methyl-5'-thioadenosine (MTA) to adenine and 5-methylthioribose-1-phosphate. Involved in the breakdown of MTA, a major by-product of polyamine biosynthesis. Responsible for the first step in the methionine salvage pathway after MTA has been generated from S-adenosylmethionine. Has broad substrate specificity with 6-aminopurine nucleosides as preferred substrates. This is S-methyl-5'-thioadenosine phosphorylase from Drosophila pseudoobscura pseudoobscura (Fruit fly).